The chain runs to 218 residues: Large ribosomal subunit protein uL3 (218 aa).

Residues 132–152 (FKGQGASHGTQAVHRRPGSIG) are disordered.

Belongs to the universal ribosomal protein uL3 family. As to quaternary structure, part of the 50S ribosomal subunit. Forms a cluster with proteins L14 and L19.

In terms of biological role, one of the primary rRNA binding proteins, it binds directly near the 3'-end of the 23S rRNA, where it nucleates assembly of the 50S subunit. This is Large ribosomal subunit protein uL3 from Rhodococcus erythropolis (strain PR4 / NBRC 100887).